The chain runs to 370 residues: NADH-quinone oxidoreductase subunit D (370 aa).

It belongs to the complex I 49 kDa subunit family. NDH-1 is composed of 14 different subunits. Subunits NuoB, C, D, E, F, and G constitute the peripheral sector of the complex.

Its subcellular location is the cell membrane. The catalysed reaction is a quinone + NADH + 5 H(+)(in) = a quinol + NAD(+) + 4 H(+)(out). Its function is as follows. NDH-1 shuttles electrons from NADH, via FMN and iron-sulfur (Fe-S) centers, to quinones in the respiratory chain. The immediate electron acceptor for the enzyme in this species is believed to be a menaquinone. Couples the redox reaction to proton translocation (for every two electrons transferred, four hydrogen ions are translocated across the cytoplasmic membrane), and thus conserves the redox energy in a proton gradient. This is NADH-quinone oxidoreductase subunit D from Desulfitobacterium hafniense (strain Y51).